A 154-amino-acid chain; its full sequence is Phosphopantetheine adenylyltransferase (154 aa).

Thr-10 contacts substrate. Residues 10-11 and His-18 contribute to the ATP site; that span reads TF. Lys-42, Leu-74, and Arg-88 together coordinate substrate. ATP is bound by residues 89–91, Glu-99, and 124–130; these read GLR and NAFISSS.

This sequence belongs to the bacterial CoaD family. As to quaternary structure, homohexamer. The cofactor is Mg(2+).

It is found in the cytoplasm. It carries out the reaction (R)-4'-phosphopantetheine + ATP + H(+) = 3'-dephospho-CoA + diphosphate. Its pathway is cofactor biosynthesis; coenzyme A biosynthesis; CoA from (R)-pantothenate: step 4/5. Reversibly transfers an adenylyl group from ATP to 4'-phosphopantetheine, yielding dephospho-CoA (dPCoA) and pyrophosphate. The polypeptide is Phosphopantetheine adenylyltransferase (Nautilia profundicola (strain ATCC BAA-1463 / DSM 18972 / AmH)).